The primary structure comprises 407 residues: Serine/threonine transporter SstT (407 aa).

Transmembrane regions (helical) follow at residues 14-34 (GSLV…ATVS), 48-68 (FVGA…AASI), 82-102 (IVIL…LMSF), 141-161 (AVLT…GLAL), 192-212 (IGIF…AIAG), 216-236 (LLLV…PAIV), 290-310 (IPLG…ILTL), 316-336 (MGIQ…GVSA), and 363-383 (VAMQ…SAET).

The protein belongs to the dicarboxylate/amino acid:cation symporter (DAACS) (TC 2.A.23) family.

Its subcellular location is the cell inner membrane. The enzyme catalyses L-serine(in) + Na(+)(in) = L-serine(out) + Na(+)(out). It carries out the reaction L-threonine(in) + Na(+)(in) = L-threonine(out) + Na(+)(out). Involved in the import of serine and threonine into the cell, with the concomitant import of sodium (symport system). The sequence is that of Serine/threonine transporter SstT from Shewanella halifaxensis (strain HAW-EB4).